Consider the following 113-residue polypeptide: Antisense of depressing factor protein 1 (113 aa).

The segment covering 1–11 (MGKCSMKKKGV) has biased composition (basic residues). The interval 1–35 (MGKCSMKKKGVGKNVGVGKKVQKKRSISTAERKRT) is disordered.

It belongs to the ADF1 family.

It localises to the nucleus. Its function is as follows. Transcriptional repressor which negatively regulates transcription of FYV5 by binding to the promoter on the sense strand. The polypeptide is Antisense of depressing factor protein 1 (Saccharomyces cerevisiae (strain ATCC 204508 / S288c) (Baker's yeast)).